The primary structure comprises 161 residues: Protein-export protein SecB (161 aa).

The protein belongs to the SecB family. As to quaternary structure, homotetramer, a dimer of dimers. One homotetramer interacts with 1 SecA dimer.

It is found in the cytoplasm. In terms of biological role, one of the proteins required for the normal export of preproteins out of the cell cytoplasm. It is a molecular chaperone that binds to a subset of precursor proteins, maintaining them in a translocation-competent state. It also specifically binds to its receptor SecA. The sequence is that of Protein-export protein SecB from Methylocella silvestris (strain DSM 15510 / CIP 108128 / LMG 27833 / NCIMB 13906 / BL2).